The sequence spans 397 residues: 16-O-methyltransferase bsc6 (397 aa).

Residue D262 participates in S-adenosyl-L-methionine binding. H302 acts as the Proton acceptor in catalysis.

It belongs to the class I-like SAM-binding methyltransferase superfamily. Cation-independent O-methyltransferase family. S-adenosyl-L-methionine serves as cofactor.

It participates in mycotoxin biosynthesis. 16-O-methyltransferase; part of the gene cluster that mediates the biosynthesis of the diterpene glucoside brassicicene C. In the first step of the brassicicene C biosynthesis, the bifunctional diterpene synthase bsc8 that possesses both prenyl transferase and terpene cyclase activity, converts isopentenyl diphosphate and dimethylallyl diphosphate into geranylgeranyl diphosphate (GGDP) that is further converted into fusicocca-2,10(14)-diene, the first precursor for brassicicene C. Fusicocca-2,10(14)-diene is then substrate of cytochrome P450 monooxygenase bsc1 for hydroxylation at the C-8 position. Oxidation at C-16 position to aldehyde is then catalyzed by the cytochrome P450 monooyxygenase bsc7, yielding fusicocca-2,10(14)-diene-8-beta,16-diol. Follows the isomerization of the double bond and reduction of aldehyde to alcohol catalyzed by the short-chain dehydrogenase/reductase bsc3 to yield the diol compound fusicocca-1,10(14)-diene-8 beta,16-diol. The next step is the oxidation at the C-3 position of fusicocca-2,10(14)-diene-8-beta,16-diol catalyzed by the alpha-ketoglutarate dependent dioxygenase bsc9, to produce a triol compound. Methylation of the hydroxy group at position 16 is performed by the methyltransferase bsc6. 16-O-methylation is followed by oxidation at the C-13 position to ketone and an alkyl shift of the methyl group leads to brassicicene C. Although the probable acetyltransferase bsc4 is included in the gene cluster, no acetylation reactions are necessary for brassicicene C biosynthesis. However, the fact that brassicicene E, which is a structurally related compound having an acetoxy group at position 12, was previously isolated from another strain of A.brassicicola suggests that the ATCC 96836 strain might also produce a small amount of brassicicene E. The sequence is that of 16-O-methyltransferase bsc6 from Alternaria brassicicola (Dark leaf spot agent).